Reading from the N-terminus, the 1080-residue chain is Kinesin-like protein KIN-14E (1080 aa).

Positions 1–35 (MDFSWTTGWEKAAADDDEAESAPAPAPPAPSPQEA) are disordered. Residues 247-355 (QTRTSKLISK…KQEQTLLSLE (109 aa)) are a coiled coil. The Kinesin motor domain occupies 407 to 729 (NIRVFCRCRP…LNFASRVRRI (323 aa)). 490 to 497 (GQTGTGKT) is an ATP binding site. Positions 736 to 893 (KQVDTAELQK…EHHRSVAESK (158 aa)) form a coiled coil. Positions 960–970 (AMSEKEQHILR) are enriched in basic and acidic residues. The segment at 960–1080 (AMSEKEQHIL…AVNKTRGWVR (121 aa)) is disordered. Positions 971-985 (SSDSMNKKVTNNSSI) are enriched in polar residues. Positions 1047–1059 (TATSKTAAATHKT) are enriched in low complexity.

This sequence belongs to the TRAFAC class myosin-kinesin ATPase superfamily. Kinesin family. KIN-14 subfamily.

The sequence is that of Kinesin-like protein KIN-14E from Oryza sativa subsp. japonica (Rice).